A 356-amino-acid polypeptide reads, in one-letter code: tRNA N6-adenosine threonylcarbamoyltransferase (356 aa).

Residues histidine 110 and histidine 114 each coordinate Fe cation. Substrate is bound by residues 132-136 (LVSGG), aspartate 165, glycine 178, aspartate 182, and asparagine 288. Aspartate 316 lines the Fe cation pocket.

It belongs to the KAE1 / TsaD family. The cofactor is Fe(2+).

It localises to the cytoplasm. It carries out the reaction L-threonylcarbamoyladenylate + adenosine(37) in tRNA = N(6)-L-threonylcarbamoyladenosine(37) in tRNA + AMP + H(+). Functionally, required for the formation of a threonylcarbamoyl group on adenosine at position 37 (t(6)A37) in tRNAs that read codons beginning with adenine. Is involved in the transfer of the threonylcarbamoyl moiety of threonylcarbamoyl-AMP (TC-AMP) to the N6 group of A37, together with TsaE and TsaB. TsaD likely plays a direct catalytic role in this reaction. This chain is tRNA N6-adenosine threonylcarbamoyltransferase, found in Maridesulfovibrio salexigens (strain ATCC 14822 / DSM 2638 / NCIMB 8403 / VKM B-1763) (Desulfovibrio salexigens).